Reading from the N-terminus, the 275-residue chain is Small ribosomal subunit protein uS2 (275 aa).

Positions 244–275 (REGAEASKKKATVKKKAAPRAASGESAEAAAE) are disordered. The segment covering 252 to 261 (KKATVKKKAA) has biased composition (basic residues). Residues 262–275 (PRAASGESAEAAAE) are compositionally biased toward low complexity.

It belongs to the universal ribosomal protein uS2 family.

In Thioalkalivibrio sulfidiphilus (strain HL-EbGR7), this protein is Small ribosomal subunit protein uS2.